A 397-amino-acid chain; its full sequence is Metal tolerance protein 4 (397 aa).

Residues 1–19 are compositionally biased toward basic and acidic residues; the sequence is MEAKGENDARAPLLAERRR. The tract at residues 1–27 is disordered; the sequence is MEAKGENDARAPLLAERRRNSVGSMRG. Over 1–104 the chain is Cytoplasmic; sequence MEAKGENDAR…EQKQSEFAMK (104 aa). A helical transmembrane segment spans residues 105–122; that stretch reads ISNYANMILLALKIYATI. Over 123–126 the chain is Vacuolar; sequence KSGS. Residues 127 to 147 traverse the membrane as a helical segment; the sequence is IAIAASTLDSLLDLMAGGILW. Residues 148–170 are Cytoplasmic-facing; sequence FTHLSMKSINVYKYPIGKLRVQP. A helical transmembrane segment spans residues 171–191; sequence VGIIIFAAVMATLGFQVFVQA. Residues 192-208 are Vacuolar-facing; it reads VEKLIVNETPDKLTPVQ. The chain crosses the membrane as a helical span at residues 209–229; it reads LTWLYSIMIFATVVKLALWLY. At 230 to 248 the chain is on the cytoplasmic side; the sequence is CRTSGNKIVRAYAKDHYFD. Residues 249–269 traverse the membrane as a helical segment; the sequence is VVTNVVGLAAAVLGDMFYWWI. Residue Asp-270 is a topological domain, vacuolar. Residues 271-291 form a helical membrane-spanning segment; the sequence is PVGAIALAVYTITNWSGTVWE. At 292 to 397 the chain is on the cytoplasmic side; it reads NAVSLVGESA…ILSKLPSSQP (106 aa).

This sequence belongs to the cation diffusion facilitator (CDF) transporter (TC 2.A.4) family. SLC30A subfamily.

The protein localises to the vacuole membrane. Its function is as follows. Involved in sequestration of excess metal in the cytoplasm into vacuoles to maintain metal homeostasis. This Oryza sativa subsp. japonica (Rice) protein is Metal tolerance protein 4 (MTP4).